A 267-amino-acid chain; its full sequence is PHD finger protein ALFIN-LIKE 7 (267 aa).

Residues 162 to 207 (TKVSNGSSKSNKSNPKPSKQSNSNSKPAKPPQPKDEEDSGPEGTED) form a disordered region. Residues 165 to 188 (SNGSSKSNKSNPKPSKQSNSNSKP) are compositionally biased toward low complexity. The span at 196–207 (DEEDSGPEGTED) shows a compositional bias: acidic residues. The PHD-type zinc finger occupies 211-263 (AYMCGACGETYANGEFWICCDVCEKWFHGKCVRITPAKAEHIKQYKCPGCSSK).

This sequence belongs to the Alfin family. Interacts with H3K4me3 and to a lesser extent with H3K4me2.

The protein localises to the nucleus. In terms of biological role, histone-binding component that specifically recognizes H3 tails trimethylated on 'Lys-4' (H3K4me3), which mark transcription start sites of virtually all active genes. In Oryza sativa subsp. japonica (Rice), this protein is PHD finger protein ALFIN-LIKE 7.